We begin with the raw amino-acid sequence, 110 residues long: Competence pilus inhibition repressor (110 aa).

The region spanning 7–61 (VRFLRKRQGWTQQQLADFSHTSKSNISNLENGNQGYSPAILEYLAKAFNCSVSQI) is the HTH cro/C1-type domain. Positions 18 to 37 (QQQLADFSHTSKSNISNLEN) form a DNA-binding region, H-T-H motif.

Functionally, represses transcription of the PilB-specific inhibitory protein CpiA. The sequence is that of Competence pilus inhibition repressor from Acinetobacter baylyi (strain ATCC 33305 / BD413 / ADP1).